Reading from the N-terminus, the 159-residue chain is Ribosome maturation factor RimP (159 aa).

Belongs to the RimP family.

The protein resides in the cytoplasm. Functionally, required for maturation of 30S ribosomal subunits. This Streptococcus agalactiae serotype III (strain NEM316) protein is Ribosome maturation factor RimP.